The chain runs to 1395 residues: DNA-directed RNA polymerase subunit beta' (1395 aa).

Zn(2+)-binding residues include C70, C72, C85, and C88. Mg(2+)-binding residues include D461, D463, and D465. C815, C889, C896, and C899 together coordinate Zn(2+).

It belongs to the RNA polymerase beta' chain family. The RNAP catalytic core consists of 2 alpha, 1 beta, 1 beta' and 1 omega subunit. When a sigma factor is associated with the core the holoenzyme is formed, which can initiate transcription. Requires Mg(2+) as cofactor. Zn(2+) is required as a cofactor.

The catalysed reaction is RNA(n) + a ribonucleoside 5'-triphosphate = RNA(n+1) + diphosphate. DNA-dependent RNA polymerase catalyzes the transcription of DNA into RNA using the four ribonucleoside triphosphates as substrates. The sequence is that of DNA-directed RNA polymerase subunit beta' from Ruthia magnifica subsp. Calyptogena magnifica.